We begin with the raw amino-acid sequence, 751 residues long: MSLAFGWAAVILLLQTADTASAVTTPHDKARIFADLSPQEIKAVHSFLMSRKELGLESSKNLTLAKNSVFLIEMLLPKKKNVLKFLDEGRKSPVREARAIIFFGAQDHPNVTEFAVGPLPRPCYVQALSPRPGHHLSWSSRPISTAEYDLLYHMLNRAITPLHQFFLDTTGFSFLGCDDRFLTFTDVAPRGVESGQRRSWLIVQRYVEGYFLHPTGLEILVDHSSTDVQDWRVEQLWYNGKFYNSPEELAQKYAVGEVEAVVLEEVVLEDPLPGATEQPPLFSSYKPRGEFHTPVTVAGPHVVQPSGPRYKLEGNVVLYGDWSFSYRLRSSSGLQIFNVLFGGERVAYEVSVQEAVALYGGHTPAGMQTKYIDVGWGLGSVTHELAPGIDCPETATFLDAFHYYDSDGPVLYPRALCLFEMPTGVPLRRHFDSNFKGGFNFYAGLKGYVLVLRTTSTVYNYDYIWDFIFYPNGVMETKMHATGYVHATFYTPEGLRHGTRLQTHLLGNIHTHLVHYRVDLDVAGTKNSFRTLKTKLENITNPWSPSHSLVQPTLEQTQYSHEHQAAFRFGQTLPKYLLFSSPQKNRWGHRRSYRLQIHSMAEQVLPPGWQEERAVTWARYPLAVTKYRESERYSSSLYNQNDPWDPPVVFEEFLRNNENIENEDLVAWVTVGFLHIPHSEDVPNTATPGNCVGFLIRPFNFFEEDPSLASRDTVIVWPQDNGLNHVQRWIPENRDCLVSPPFSYNGTYKPV.

The first 22 residues, 1–22 (MSLAFGWAAVILLLQTADTASA), serve as a signal peptide directing secretion. Residues N61 and N110 are each glycosylated (N-linked (GlcNAc...) asparagine). D373 serves as the catalytic Proton acceptor. The cysteines at positions 391 and 417 are disulfide-linked. Residue Y461 is the Schiff-base intermediate with substrate; via topaquinone of the active site. Residue Y461 is modified to 2',4',5'-topaquinone. The Cu(2+) site is built by H510 and H512. D519, L520, and D521 together coordinate Ca(2+). A glycan (N-linked (GlcNAc...) asparagine) is linked at N538. Ca(2+)-binding residues include E562, F653, N656, E658, D664, and L665. H675 is a Cu(2+) binding site. A glycan (N-linked (GlcNAc...) asparagine) is linked at N745.

Belongs to the copper/topaquinone oxidase family. In terms of assembly, homodimer; disulfide-linked. Requires Cu(2+) as cofactor. The cofactor is Ca(2+). L-topaquinone serves as cofactor. Post-translationally, topaquinone (TPQ) is generated by copper-dependent autoxidation of a specific tyrosyl residue. In terms of processing, N-glycosylated.

The protein localises to the secreted. The protein resides in the extracellular space. Its subcellular location is the cell membrane. It carries out the reaction histamine + O2 + H2O = imidazole-4-acetaldehyde + H2O2 + NH4(+). The catalysed reaction is N(tau)-methylhistamine + O2 + H2O = 1-methylimidazole-4-acetaldehyde + H2O2 + NH4(+). The enzyme catalyses putrescine + O2 + H2O = 4-aminobutanal + H2O2 + NH4(+). It catalyses the reaction cadaverine + O2 + H2O = 5-aminopentanal + H2O2 + NH4(+). With respect to regulation, inhibited by amiloride and amiloride analogs. Functionally, catalyzes the oxidative deamination of primary amines to the corresponding aldehydes with the concomitant production of hydrogen peroxide and ammonia. Its preferred substrates in vitro are the diamines histamine and 1-methylhistamine and it could therefore play a role in allergic and immune responses. Has a broad specificity for diamines and can also act on cadaverine and putrescine, two products of amino acid catabolism. It could also act on polyamines, like spermidine and spermine though less efficiently, and regulate various biological processes. In Mus musculus (Mouse), this protein is Diamine oxidase [copper-containing].